The primary structure comprises 125 residues: NADPH-dependent 7-cyano-7-deazaguanine reductase (125 aa).

Cysteine 41 functions as the Thioimide intermediate in the catalytic mechanism. The active-site Proton donor is aspartate 48. Residues 63–65 (IEL) and 82–83 (HE) each bind substrate.

The protein belongs to the GTP cyclohydrolase I family. QueF type 1 subfamily.

The protein localises to the cytoplasm. It catalyses the reaction 7-aminomethyl-7-carbaguanine + 2 NADP(+) = 7-cyano-7-deazaguanine + 2 NADPH + 3 H(+). The protein operates within tRNA modification; tRNA-queuosine biosynthesis. Its function is as follows. Catalyzes the NADPH-dependent reduction of 7-cyano-7-deazaguanine (preQ0) to 7-aminomethyl-7-deazaguanine (preQ1). This chain is NADPH-dependent 7-cyano-7-deazaguanine reductase, found in Sulfurovum sp. (strain NBC37-1).